The following is a 356-amino-acid chain: Anthranilate phosphoribosyltransferase (356 aa).

Residues G96, 99–100, T104, 106–109, 124–132, and S136 contribute to the 5-phospho-alpha-D-ribose 1-diphosphate site; these read GD, NIST, and KHGNRSASG. Anthranilate is bound at residue G96. A Mg(2+)-binding site is contributed by S108. N127 contributes to the anthranilate binding site. R182 provides a ligand contact to anthranilate. 2 residues coordinate Mg(2+): D241 and E242.

The protein belongs to the anthranilate phosphoribosyltransferase family. In terms of assembly, homodimer. Requires Mg(2+) as cofactor.

The catalysed reaction is N-(5-phospho-beta-D-ribosyl)anthranilate + diphosphate = 5-phospho-alpha-D-ribose 1-diphosphate + anthranilate. It functions in the pathway amino-acid biosynthesis; L-tryptophan biosynthesis; L-tryptophan from chorismate: step 2/5. Its function is as follows. Catalyzes the transfer of the phosphoribosyl group of 5-phosphorylribose-1-pyrophosphate (PRPP) to anthranilate to yield N-(5'-phosphoribosyl)-anthranilate (PRA). In Trichodesmium erythraeum (strain IMS101), this protein is Anthranilate phosphoribosyltransferase.